The following is a 396-amino-acid chain: Bone morphogenetic protein 2 (396 aa).

Positions 1 to 23 are cleaved as a signal peptide; the sequence is MVAGTRCLLALLLPQVLLGGAAG. Residues 24–282 constitute a propeptide, cleaved by PCSK5; sequence LVPELGRRKF…GHPLHKREKR (259 aa). Residues 84–121 form a disordered region; sequence RRHSGQPGSPAPDHRLERAASRANTVRSFHHEESLEEL. Residue serine 87 is modified to Phosphoserine. N-linked (GlcNAc...) asparagine glycosylation is found at asparagine 135, asparagine 163, asparagine 164, and asparagine 200. Residues 271–293 form a disordered region; that stretch reads GKGHPLHKREKRQAKHKQRKRLK. Positions 274 to 293 are enriched in basic residues; it reads HPLHKREKRQAKHKQRKRLK. Cystine bridges form between cysteine 296–cysteine 361, cysteine 325–cysteine 393, and cysteine 329–cysteine 395. An N-linked (GlcNAc...) (high mannose) asparagine glycan is attached at asparagine 338.

Belongs to the TGF-beta family. In terms of assembly, homodimer; disulfide-linked. Interacts with SOSTDC1. Interacts with GREM2, RGMA, RGMB and RGMC. Interacts with ASPN. Interacts with MAFP5. Interacts with FBN1 (via N-terminal domain) and FBN2. Interacts with type I receptor BMPR1A. Interacts with type II receptor BMPR2. Interacts with SCUBE3. Interacts with TNFAIP6 (primarily via Link domain); this interaction is inhibited by hyaluronan. Interacts with ERFE. Interacts with BMPR1A/ALK3; the interaction may induce HAMP expression. Forms heterodimers with BMP6 in vitro; the heterodimer then binds to its receptor BMPR1A /ALK3 and may induce HAMP expression. Interacts with TGFBR3. Particularly abundant in lung, spleen and colon and in low but significant levels in heart, brain, placenta, liver, skeletal muscle, kidney, pancreas, prostate, ovary and small intestine.

It is found in the secreted. Its function is as follows. Growth factor of the TGF-beta superfamily that plays essential roles in many developmental processes, including cardiogenesis, neurogenesis, and osteogenesis. Induces cartilage and bone formation. Initiates the canonical BMP signaling cascade by associating with type I receptor BMPR1A and type II receptor BMPR2. Once all three components are bound together in a complex at the cell surface, BMPR2 phosphorylates and activates BMPR1A. In turn, BMPR1A propagates signal by phosphorylating SMAD1/5/8 that travel to the nucleus and act as activators and repressors of transcription of target genes. Also acts to promote expression of HAMP, via the interaction with its receptor BMPR1A/ALK3. Can also signal through non-canonical pathways such as ERK/MAP kinase signaling cascade that regulates osteoblast differentiation. Also stimulates the differentiation of myoblasts into osteoblasts via the EIF2AK3-EIF2A-ATF4 pathway by stimulating EIF2A phosphorylation which leads to increased expression of ATF4 which plays a central role in osteoblast differentiation. Acts as a positive regulator of odontoblast differentiation during mesenchymal tooth germ formation, expression is repressed during the bell stage by MSX1-mediated inhibition of CTNNB1 signaling. In Homo sapiens (Human), this protein is Bone morphogenetic protein 2 (BMP2).